A 679-amino-acid polypeptide reads, in one-letter code: Stress-70 protein, mitochondrial (679 aa).

The transit peptide at 1–46 (MISASRAAVSRFVGTAASRGPTAARHQDGWNGLSHEAFRIVSRRDY) directs the protein to the mitochondrion. The segment at 1 to 432 (MISASRAAVS…IQGGVLAGDV (432 aa)) is interaction with NFS1. Residues threonine 63 and asparagine 64 each coordinate ADP. The segment at 63 to 431 (TNSCVAVMEG…AIQGGVLAGD (369 aa)) is nucleotide-binding domain (NBD). Lysine 76 is subject to N6-acetyllysine. The residue at position 87 (threonine 87) is a Phosphothreonine. N6-acetyllysine; alternate is present on residues lysine 135 and lysine 138. An N6-succinyllysine; alternate mark is found at lysine 135 and lysine 138. Lysine 143 bears the N6-acetyllysine mark. Lysine 206 is subject to N6-acetyllysine; alternate. Lysine 206 bears the N6-succinyllysine; alternate mark. The residue at position 206 (lysine 206) is an N6-malonyllysine; alternate. 2 positions are modified to N6-acetyllysine: lysine 234 and lysine 288. Residue lysine 300 is modified to N6-acetyllysine; alternate. Lysine 300 carries the N6-succinyllysine; alternate modification. ADP-binding residues include glutamate 313, lysine 316, and serine 320. Lysine 368 is subject to N6-succinyllysine. Residues glycine 388 and arginine 391 each contribute to the ADP site. The residue at position 394 (lysine 394) is an N6-succinyllysine. The residue at position 408 (serine 408) is a Phosphoserine. The interdomain linker stretch occupies residues 432–441 (VTDVLLLDVT). Residues 432–679 (VTDVLLLDVT…QKDNQKEEKQ (248 aa)) form an interaction with FXN and ISCU region. Positions 442 to 679 (PLSLGIETLG…QKDNQKEEKQ (238 aa)) are substrate-binding domain (SBD). Arginine 513 is subject to Omega-N-methylarginine. Residues lysine 567 and lysine 600 each carry the N6-acetyllysine; alternate modification. N6-succinyllysine; alternate is present on residues lysine 567 and lysine 600. Lysine 610 is subject to N6-succinyllysine. Lysine 612 carries the post-translational modification N6-acetyllysine. Lysine 646 is subject to N6-acetyllysine; alternate. Lysine 646 is modified (N6-succinyllysine; alternate). The segment at 656 to 679 (ASEREGSGSSGTGEQKDNQKEEKQ) is disordered. The segment covering 669 to 679 (EQKDNQKEEKQ) has biased composition (basic and acidic residues).

The protein belongs to the heat shock protein 70 family. Interacts strongly with the intermediate form of FXN and weakly with its mature form. Interacts with HSCB. Associates with the mitochondrial contact site and cristae organizing system (MICOS) complex, composed of at least MICOS10/MIC10, CHCHD3/MIC19, CHCHD6/MIC25, APOOL/MIC27, IMMT/MIC60, APOO/MIC23/MIC26 and QIL1/MIC13. This complex was also known under the names MINOS or MitOS complex. The MICOS complex associates with mitochondrial outer membrane proteins SAMM50, MTX1, MTX2 and DNAJC11, mitochondrial inner membrane protein TMEM11 and with HSPA9. Interacts with DNLZ, the interaction is required to prevent self-aggregation. Interacts with TESPA1. Interacts with PDPN. Interacts with NFU1, NFS1 and ISCU. Interacts with TP53; the interaction promotes TP53 degradation. Interacts (via SBD domain) with UBXN2A; the interaction with UBXN2A inhibits HSPA9/MOT-2 interaction with and degradation of TP53, thereby promotes TP53 translocation to the nucleus. Interacts with ITPR1 AND VDAC1; this interaction couples ITPR1 to VDAC1. Component of the TIM23 mitochondrial inner membrane pre-sequence translocase complex.

The protein resides in the mitochondrion. Its subcellular location is the nucleus. It localises to the nucleolus. The protein localises to the cytoplasm. It is found in the mitochondrion matrix. The catalysed reaction is ATP + H2O = ADP + phosphate + H(+). Its activity is regulated as follows. The chaperone activity is regulated by ATP-induced allosteric coupling of the nucleotide-binding (NBD) and substrate-binding (SBD) domains. ATP binding in the NBD leads to a conformational change in the NBD, which is transferred through the interdomain linker (IDL) to the substrate-binding domain (SBD). This elicits a reduced substrate affinity and a faster substrate exchange rate. Upon hydrolysis of ATP to ADP, the protein undergoes a conformational change that increases its affinity for substrate proteins. It cycles through repeated phases of ATP hydrolysis and nucleotide exchange, facilitating repeated cycles of substrate binding and release. Functions in collaboration with co-chaperones. Functions with the co-chaperone, DNLZ, to maintain solubility and regulate ATP hydrolysis. Nucleotide exchange factors, GRPEL1 and GRPEL2, accelerate nucleotide exchange. Functionally, mitochondrial chaperone that plays a key role in mitochondrial protein import, folding, and assembly. Plays an essential role in the protein quality control system, the correct folding of proteins, the re-folding of misfolded proteins, and the targeting of proteins for subsequent degradation. These processes are achieved through cycles of ATP binding, ATP hydrolysis, and ADP release, mediated by co-chaperones. In mitochondria, it associates with the TIM (translocase of the inner membrane) protein complex to assist in the import and folding of mitochondrial proteins. Plays an important role in mitochondrial iron-sulfur cluster (ISC) biogenesis, interacts with and stabilizes ISC cluster assembly proteins FXN, NFU1, NFS1 and ISCU. Regulates erythropoiesis via stabilization of ISC assembly. Regulates mitochondrial calcium-dependent apoptosis by coupling two calcium channels, ITPR1 and VDAC1, at the mitochondria-associated endoplasmic reticulum (ER) membrane to facilitate calcium transport from the ER lumen to the mitochondria intermembrane space, providing calcium for the downstream calcium channel MCU, which releases it into the mitochondrial matrix. Although primarily located in the mitochondria, it is also found in other cellular compartments. In the cytosol, it associates with proteins involved in signaling, apoptosis, or senescence. It may play a role in cell cycle regulation via its interaction with and promotion of degradation of TP53. May play a role in the control of cell proliferation and cellular aging. Protects against reactive oxygen species (ROS). Extracellular HSPA9 plays a cytoprotective role by preventing cell lysis following immune attack by the membrane attack complex by disrupting formation of the complex. In Bos taurus (Bovine), this protein is Stress-70 protein, mitochondrial.